Consider the following 625-residue polypeptide: DNA-directed RNA polymerase subunit gamma (625 aa).

Positions 71, 73, 86, and 89 each coordinate Zn(2+). Mg(2+)-binding residues include Asp467, Asp469, and Asp471.

This sequence belongs to the RNA polymerase beta' chain family. RpoC1 subfamily. In terms of assembly, in cyanobacteria the RNAP catalytic core is composed of 2 alpha, 1 beta, 1 beta', 1 gamma and 1 omega subunit. When a sigma factor is associated with the core the holoenzyme is formed, which can initiate transcription. Mg(2+) is required as a cofactor. Zn(2+) serves as cofactor.

It catalyses the reaction RNA(n) + a ribonucleoside 5'-triphosphate = RNA(n+1) + diphosphate. In terms of biological role, DNA-dependent RNA polymerase catalyzes the transcription of DNA into RNA using the four ribonucleoside triphosphates as substrates. In Nostoc punctiforme (strain ATCC 29133 / PCC 73102), this protein is DNA-directed RNA polymerase subunit gamma.